A 581-amino-acid polypeptide reads, in one-letter code: Urease subunit alpha (581 aa).

One can recognise a Urease domain in the interval 134-581 (GGFDSHIHFI…LPMTQRYFLF (448 aa)). His139, His141, and Lys222 together coordinate Ni(2+). N6-carboxylysine is present on Lys222. His224 contacts substrate. Ni(2+) is bound by residues His251 and His277. His325 (proton donor) is an active-site residue. Asp365 serves as a coordination point for Ni(2+).

It belongs to the metallo-dependent hydrolases superfamily. Urease alpha subunit family. In terms of assembly, heterotrimer of UreA (gamma), UreB (beta) and UreC (alpha) subunits. Three heterotrimers associate to form the active enzyme. Ni cation serves as cofactor. Carboxylation allows a single lysine to coordinate two nickel ions.

It is found in the cytoplasm. The enzyme catalyses urea + 2 H2O + H(+) = hydrogencarbonate + 2 NH4(+). It functions in the pathway nitrogen metabolism; urea degradation; CO(2) and NH(3) from urea (urease route): step 1/1. This is Urease subunit alpha from Albidiferax ferrireducens (strain ATCC BAA-621 / DSM 15236 / T118) (Rhodoferax ferrireducens).